A 258-amino-acid chain; its full sequence is MLAKRIIPCLDVRDGQVVKGVQFRNHEIIGDIVPLAKRYAEEGADELVFYDITASSDGRVVDKSWVTRVAEVIDIPFCVAGGIKTLEDAAQILSFGADKISVNSPALADPTLITRLADRFGVQCIVVGIDTWFDEETGKYHVNQYTGDESRTRVTQWETLDWVREVQQRGAGEIVLNMMNQDGVRNGYDLVQLKKVREACRVPLIASGGAGTMEHFLDAFREANVDGALAASVFHKQIINIGELKAFLAQQGVEIRVC.

Catalysis depends on residues D11 and D130.

The protein belongs to the HisA/HisF family. In terms of assembly, heterodimer of HisH and HisF.

It is found in the cytoplasm. It catalyses the reaction 5-[(5-phospho-1-deoxy-D-ribulos-1-ylimino)methylamino]-1-(5-phospho-beta-D-ribosyl)imidazole-4-carboxamide + L-glutamine = D-erythro-1-(imidazol-4-yl)glycerol 3-phosphate + 5-amino-1-(5-phospho-beta-D-ribosyl)imidazole-4-carboxamide + L-glutamate + H(+). It functions in the pathway amino-acid biosynthesis; L-histidine biosynthesis; L-histidine from 5-phospho-alpha-D-ribose 1-diphosphate: step 5/9. In terms of biological role, IGPS catalyzes the conversion of PRFAR and glutamine to IGP, AICAR and glutamate. The HisF subunit catalyzes the cyclization activity that produces IGP and AICAR from PRFAR using the ammonia provided by the HisH subunit. The sequence is that of Imidazole glycerol phosphate synthase subunit HisF from Cronobacter sakazakii (strain ATCC BAA-894) (Enterobacter sakazakii).